The following is a 305-amino-acid chain: Coiled-coil domain-containing protein 50 (305 aa).

Position 2 is an N-acetylalanine (alanine 2). The residue at position 5 (serine 5) is a Phosphoserine. Residues glutamate 86–histidine 130 adopt a coiled-coil conformation. Disordered stretches follow at residues glutamine 122–aspartate 142 and lysine 218–glutamine 305. Composition is skewed to basic and acidic residues over residues lysine 218–leucine 239 and lysine 247–serine 263. A compositionally biased stretch (polar residues) spans threonine 279–glutamine 305.

Interacts with RNF126. Post-translationally, phosphorylated on tyrosine residues. Widely expressed.

It localises to the cytoplasm. Involved in EGFR signaling. The polypeptide is Coiled-coil domain-containing protein 50 (Ccdc50) (Mus musculus (Mouse)).